Reading from the N-terminus, the 491-residue chain is Monodehydroascorbate reductase 5, chlorplastic (491 aa).

A chloroplast-targeting transit peptide spans 1-42 (MASTAAAASSQGCISWALRQRGLGGGGARAVPVLPRRRFCVS). FAD contacts are provided by residues 61-64 (GGNA), glutamate 88, arginine 95, lysine 100, and 194-195 (RD). NAD(+) is bound by residues 217–223 (GGYIGME), glutamate 241, arginine 247, and glycine 306. 219 to 223 (YIGME) is an NADP(+) binding site. The NADP(+) site is built by arginine 247 and glycine 306. An FAD-binding site is contributed by aspartate 344. 360-361 (EH) lines the NAD(+) pocket. 360–361 (EH) is an NADP(+) binding site. Valine 362 contributes to the FAD binding site. Arginine 366 provides a ligand contact to L-ascorbate. Tyrosine 391 contacts FAD. Tyrosine 391 is an NAD(+) binding site. Residue tyrosine 391 participates in NADP(+) binding. L-ascorbate is bound at residue arginine 393.

The protein belongs to the FAD-dependent oxidoreductase family. Requires FAD as cofactor.

It is found in the plastid. The protein resides in the chloroplast. It carries out the reaction 2 monodehydro-L-ascorbate radical + NADH + H(+) = 2 L-ascorbate + NAD(+). In terms of biological role, catalyzes the conversion of monodehydroascorbate to ascorbate, oxidizing NADH in the process. Ascorbate is a major antioxidant against reactive oxygen species (ROS) and nitric oxide (NO). This chain is Monodehydroascorbate reductase 5, chlorplastic, found in Oryza sativa subsp. japonica (Rice).